Consider the following 340-residue polypeptide: NAC domain-containing protein 89 (340 aa).

Residues 21 to 164 form the NAC domain; sequence VFPGFKFSPT…AMVVCRVRRN (144 aa). Residues 119–170 mediate DNA binding; sequence IGTKRTLVFHIGRAPKGERTDWIMHEYCVKGVSLDDAMVVCRVRRNKEYNSG. A compositionally biased stretch (polar residues) spans 167–181; that stretch reads YNSGTSQKAPKPNSS. The segment at 167-198 is disordered; sequence YNSGTSQKAPKPNSSAEKHAKVQNGATSSGSP.

As to quaternary structure, interacts with PAS1.

The protein resides in the cytoplasm. It localises to the nucleus. Functionally, transcription factor involved in plant cell division. The protein is NAC domain-containing protein 89 (NAC089) of Arabidopsis thaliana (Mouse-ear cress).